The chain runs to 333 residues: Olfactory receptor 1078 (333 aa).

Residues 1–25 (MDSSNRTRVSEFLLLGFVENKDLQP) lie on the Extracellular side of the membrane. Asn5 is a glycosylation site (N-linked (GlcNAc...) asparagine). A helical membrane pass occupies residues 26 to 50 (LIYGLFLSMYLVTVIGNISIIVAII). Residues 51 to 57 (SDPCLHT) are Cytoplasmic-facing. The chain crosses the membrane as a helical span at residues 58-79 (PMYFFLSNLSFVDICFISTTVP). The Extracellular portion of the chain corresponds to 80-100 (KMLVNIQTQNNVITYAGCITQ). Cysteines 97 and 189 form a disulfide. A helical membrane pass occupies residues 101 to 120 (IYFFLLFVELDNFLLTIMAY). Over 121–139 (DRYVAICHPMHYTVIMNYK) the chain is Cytoplasmic. The helical transmembrane segment at 140–158 (LCGFLVLVSWIVSVLHALF) threads the bilayer. Topologically, residues 159 to 196 (QSLMMLALPFCTHLEIPHYFCEPNQVIQLTCSDAFLND) are extracellular. Residues 197-219 (LVIYFTLVLLATVPLAGIFYSYF) traverse the membrane as a helical segment. Topologically, residues 220–236 (KIVSSICAISSVHGKYK) are cytoplasmic. The chain crosses the membrane as a helical span at residues 237 to 260 (AFSTCASHLSVVSLFYCTGLGVYL). At 261 to 272 (SSAANNSSQASA) the chain is on the extracellular side. A helical transmembrane segment spans residues 273–292 (TASVMYTVVTPMVNPFIYSL). Residues 293-333 (RNKDVKSVLKKTLCEEVIRSPPSLLHFFLVLCHLPCFIFCY) lie on the Cytoplasmic side of the membrane.

This sequence belongs to the G-protein coupled receptor 1 family. In terms of tissue distribution, olfactory epithelium.

It localises to the cell membrane. Its function is as follows. Odorant receptor. The protein is Olfactory receptor 1078 (Olr1078) of Rattus norvegicus (Rat).